A 295-amino-acid polypeptide reads, in one-letter code: MANITAQLVKELREKTGAGMMDCKKALVQTDGDLEAAIDFLREKGLSSAAKKADRIAAEGTTYILEQGNEAIILEVNAETDFVAKNDKFQVLVSSLAEQLLTAKPASVEAALELTNAEGVKIEDQISTAVATIGEKITLRRFEIKTKTDADSFGAYLHMGGRIGVLVTLEGSTDASAAKDVAMHIAAINPTYVSRDEVSAEEVERERKVLTEQALNEGKPENIVAKMVEGRLGKYFEDVCLLDQSFVKNSDQKVRDFVASTGGSVNGFVRYAVGEGIEKREDNFAEEVMSQVKGN.

Positions 80–83 are involved in Mg(2+) ion dislocation from EF-Tu; the sequence is TDFV.

Belongs to the EF-Ts family.

It localises to the cytoplasm. Associates with the EF-Tu.GDP complex and induces the exchange of GDP to GTP. It remains bound to the aminoacyl-tRNA.EF-Tu.GTP complex up to the GTP hydrolysis stage on the ribosome. The protein is Elongation factor Ts of Lysinibacillus sphaericus (strain C3-41).